Consider the following 396-residue polypeptide: Cell division protein DivIB (396 aa).

2 disordered regions span residues 1-23 (MSKD…SEWQ) and 37-116 (EVAL…ATKE). At 1-130 (MSKDKKNEDK…AKIPGIHILR (130 aa)) the chain is on the cytoplasmic side. Basic and acidic residues-rich tracts occupy residues 37–65 (EVAL…KQDQ) and 75–116 (ESAK…ATKE). The chain crosses the membrane as a helical span at residues 131 to 151 (AFTILFPSLLLLIVSAYLLSP). Residues 152-396 (YATMKDIRVE…NQTNQRSSRR (245 aa)) lie on the Extracellular side of the membrane. Residues 153 to 223 (ATMKDIRVEG…TKFTIKVKEY (71 aa)) enclose the POTRA domain. The segment covering 361-385 (KAKQEAKEAEKKQEEEQKKQEEESN) has biased composition (basic and acidic residues). The disordered stretch occupies residues 361–396 (KAKQEAKEAEKKQEEEQKKQEEESNRNQTNQRSSRR). Residues 386–396 (RNQTNQRSSRR) show a composition bias toward low complexity.

This sequence belongs to the FtsQ/DivIB family. DivIB subfamily.

The protein localises to the cell membrane. Cell division protein that may be involved in stabilizing or promoting the assembly of the division complex. This chain is Cell division protein DivIB, found in Streptococcus pneumoniae (strain ATCC BAA-255 / R6).